The sequence spans 60 residues: Large ribosomal subunit protein bL32 (60 aa).

Belongs to the bacterial ribosomal protein bL32 family.

The protein is Large ribosomal subunit protein bL32 of Borrelia duttonii (strain Ly).